Reading from the N-terminus, the 303-residue chain is Ornithine carbamoyltransferase (303 aa).

Residues 52–55, glutamine 79, arginine 103, and 130–133 each bind carbamoyl phosphate; these read STRT and HPCQ. Residues asparagine 161, aspartate 222, and 226 to 227 each bind L-ornithine; that span reads SM. Carbamoyl phosphate contacts are provided by residues 262 to 263 and lysine 290; that span reads CL.

This sequence belongs to the aspartate/ornithine carbamoyltransferase superfamily. OTCase family.

It localises to the cytoplasm. The enzyme catalyses carbamoyl phosphate + L-ornithine = L-citrulline + phosphate + H(+). The protein operates within amino-acid biosynthesis; L-arginine biosynthesis; L-arginine from L-ornithine and carbamoyl phosphate: step 1/3. In terms of biological role, reversibly catalyzes the transfer of the carbamoyl group from carbamoyl phosphate (CP) to the N(epsilon) atom of ornithine (ORN) to produce L-citrulline. The protein is Ornithine carbamoyltransferase of Desulfotalea psychrophila (strain LSv54 / DSM 12343).